We begin with the raw amino-acid sequence, 186 residues long: Elongation factor P (186 aa).

Belongs to the elongation factor P family.

The protein localises to the cytoplasm. It functions in the pathway protein biosynthesis; polypeptide chain elongation. Its function is as follows. Involved in peptide bond synthesis. Stimulates efficient translation and peptide-bond synthesis on native or reconstituted 70S ribosomes in vitro. Probably functions indirectly by altering the affinity of the ribosome for aminoacyl-tRNA, thus increasing their reactivity as acceptors for peptidyl transferase. This chain is Elongation factor P, found in Cupriavidus metallidurans (strain ATCC 43123 / DSM 2839 / NBRC 102507 / CH34) (Ralstonia metallidurans).